Consider the following 450-residue polypeptide: UDP-N-acetylmuramoylalanine--D-glutamate ligase (450 aa).

Position 119–125 (119–125 (GSNGKTT)) interacts with ATP.

This sequence belongs to the MurCDEF family.

It is found in the cytoplasm. It catalyses the reaction UDP-N-acetyl-alpha-D-muramoyl-L-alanine + D-glutamate + ATP = UDP-N-acetyl-alpha-D-muramoyl-L-alanyl-D-glutamate + ADP + phosphate + H(+). It functions in the pathway cell wall biogenesis; peptidoglycan biosynthesis. Functionally, cell wall formation. Catalyzes the addition of glutamate to the nucleotide precursor UDP-N-acetylmuramoyl-L-alanine (UMA). The chain is UDP-N-acetylmuramoylalanine--D-glutamate ligase from Bacillus cereus (strain ATCC 14579 / DSM 31 / CCUG 7414 / JCM 2152 / NBRC 15305 / NCIMB 9373 / NCTC 2599 / NRRL B-3711).